A 188-amino-acid chain; its full sequence is Threonylcarbamoyl-AMP synthase (188 aa).

The YrdC-like domain occupies 3 to 188 (QLHPSDIKDI…RSGKILRNGQ (186 aa)).

It belongs to the SUA5 family. TsaC subfamily.

The protein resides in the cytoplasm. It catalyses the reaction L-threonine + hydrogencarbonate + ATP = L-threonylcarbamoyladenylate + diphosphate + H2O. Functionally, required for the formation of a threonylcarbamoyl group on adenosine at position 37 (t(6)A37) in tRNAs that read codons beginning with adenine. Catalyzes the conversion of L-threonine, HCO(3)(-)/CO(2) and ATP to give threonylcarbamoyl-AMP (TC-AMP) as the acyladenylate intermediate, with the release of diphosphate. This chain is Threonylcarbamoyl-AMP synthase, found in Shewanella putrefaciens (strain CN-32 / ATCC BAA-453).